The sequence spans 331 residues: Pantothenate kinase (331 aa).

Position 109–116 (109–116 (GSVAVGKS)) interacts with ATP.

Belongs to the prokaryotic pantothenate kinase family.

The protein resides in the cytoplasm. It carries out the reaction (R)-pantothenate + ATP = (R)-4'-phosphopantothenate + ADP + H(+). Its pathway is cofactor biosynthesis; coenzyme A biosynthesis; CoA from (R)-pantothenate: step 1/5. The protein is Pantothenate kinase of Sinorhizobium medicae (strain WSM419) (Ensifer medicae).